Reading from the N-terminus, the 975-residue chain is MKLEHPDRLMNRTPLSLAALETHDAFAERHIGPDAASQQAMLDTLGFASRAALIDAVIPASIRRAETLPLGPFAQPKSEAEALAALRVLADKNEVFRSYIGQGYHDTHTPAVILRNVLENPAWYTAYTPYQPEISQGRLEALLNFQQMVADLTGLAISNASLLDEATAAAEAMTLLQRTGKPTSNVFYVADDVLPQTLEVIRTRALPVGIEVKTGPAADAAQANAFGVLLQYPGVNGDVRDYRALTEAIHAAGGHVVVAADLLALTVLTPPGDWGADVAIGNTQRFGVPMGFGGPHAAYLAVRDEFKRQMPGRLVGVTVDAQGKPALRLALQTREQHIRREKATSNVCTAQALLAIMASMYAVYHGPHGLKTIALRVNRIAALLAAGVKQLGFATVNDTFFDTLTIDTGARTAQVHEFAKAKRINLRRVSDTQVGVSVDETTTRDDLADLLAVFAQAAGGTAPAVDALDAGLAGVAALPAGLERTSAYLTHHVFNRHHSETEMLRYLRSLSDKDLALDRSMIPLGSCTMKLNATSEMLPVTWPEFGGIHPFAPAEQTVGYREMIDQLEQMLVAATGYAAVSLQPNAGSQGEYAGLLIIHAYHASRGEAHRDVCLIPASAHGTNPASAHMAGMKVVVVACDAQGNVDIADLKAKADEHAKDLAAIMITYPSTHGVFEQNVREICEIVHAHGGQVYVDGANMNAMVGLTAPGQFGGDVSHLNLHKTFCIPHGGGGPGVGPVAVGAHLAKFLPNQRSTGYTREEDGIGAVSAAPYGSASILPISWMYIAMMGAKNLTAATETAILNANYIAKRLAPHYPVLYSGPGGLVAHECILDLRPIKESSGISVDDVAKRLMDYGFHAPTMSFPVPGTLMVEPTESESQEELDRFIAAMIAIRDEIRAVEEGRADREDNPLRHAPHTAAVVTANEWLHAYSREQAAYPVASLGTNKYWPPVGRADNVYGDRNLFCSCVPMSEYA.

K723 carries the post-translational modification N6-(pyridoxal phosphate)lysine.

Belongs to the GcvP family. As to quaternary structure, the glycine cleavage system is composed of four proteins: P, T, L and H. It depends on pyridoxal 5'-phosphate as a cofactor.

It carries out the reaction N(6)-[(R)-lipoyl]-L-lysyl-[glycine-cleavage complex H protein] + glycine + H(+) = N(6)-[(R)-S(8)-aminomethyldihydrolipoyl]-L-lysyl-[glycine-cleavage complex H protein] + CO2. In terms of biological role, the glycine cleavage system catalyzes the degradation of glycine. The P protein binds the alpha-amino group of glycine through its pyridoxal phosphate cofactor; CO(2) is released and the remaining methylamine moiety is then transferred to the lipoamide cofactor of the H protein. The sequence is that of Glycine dehydrogenase (decarboxylating) from Burkholderia lata (strain ATCC 17760 / DSM 23089 / LMG 22485 / NCIMB 9086 / R18194 / 383).